Here is a 760-residue protein sequence, read N- to C-terminus: Colleterpenol synthase (760 aa).

The terpene cyclase stretch occupies residues 14 to 335 (ASSGLRSKFR…YTRRYPSKAD (322 aa)). D95 lines the Mg(2+) pocket. Positions 95–99 (DDYYD) match the DDXXD 1 motif. An NSE/DTE motif is present at residues 233–241 (NDLYSWPKE). The interval 336–759 (LRQPEVEFVD…LELVLRRLWI (424 aa)) is prenyltransferase. The interval 359–400 (EEKVVSESVESLPTTEVEDEFSSSDASPGSVDQAISTPPSTT) is disordered. Polar residues predominate over residues 391–400 (QAISTPPSTT). Positions 477, 480, and 509 each coordinate isopentenyl diphosphate. Mg(2+) contacts are provided by D516 and D520. Residues 516-520 (DDIED) carry the DDXXD 2 motif. R525 is a dimethylallyl diphosphate binding site. R526 lines the isopentenyl diphosphate pocket. Dimethylallyl diphosphate contacts are provided by K605, T606, Q643, N650, K660, and K670.

This sequence in the N-terminal section; belongs to the terpene synthase family. It in the C-terminal section; belongs to the FPP/GGPP synthase family. In terms of assembly, hexamer. It depends on Mg(2+) as a cofactor.

It catalyses the reaction 5 isopentenyl diphosphate + dimethylallyl diphosphate = all-trans-hexaprenyl diphosphate + 5 diphosphate. The catalysed reaction is all-trans-hexaprenyl diphosphate + H2O = colleterpenol + diphosphate. Functionally, bifunctional terpene synthase that converts dimethylallyl diphosphate (DMAPP) and isopentenyl diphosphate (IPP) into colleterpenol as a single product. The C-terminal prenyltransferase (PT) domain of CgCS catalyzes formation of hexaprenyl diphosphate (HexPP), whereas the N-terminal terpene cyclase (TC) domain catalyzes the cyclization of HexPP to colleterpenol. This is Colleterpenol synthase from Colletotrichum gloeosporioides (Anthracnose fungus).